Here is a 197-residue protein sequence, read N- to C-terminus: Imidazoleglycerol-phosphate dehydratase (197 aa).

This sequence belongs to the imidazoleglycerol-phosphate dehydratase family.

The protein localises to the cytoplasm. It carries out the reaction D-erythro-1-(imidazol-4-yl)glycerol 3-phosphate = 3-(imidazol-4-yl)-2-oxopropyl phosphate + H2O. The protein operates within amino-acid biosynthesis; L-histidine biosynthesis; L-histidine from 5-phospho-alpha-D-ribose 1-diphosphate: step 6/9. This Chromohalobacter salexigens (strain ATCC BAA-138 / DSM 3043 / CIP 106854 / NCIMB 13768 / 1H11) protein is Imidazoleglycerol-phosphate dehydratase.